Consider the following 336-residue polypeptide: Cytoskeleton protein RodZ (336 aa).

Over 1 to 111 (MNTEATHDQN…LGKRRKKRDG (111 aa)) the chain is Cytoplasmic. In terms of domain architecture, HTH cro/C1-type spans 19 to 71 (LRNAREQLGLSQQAVAERLCLKVSTVRDIEEDKAPSDLASTFLRGYIRSYARL). The H-T-H motif DNA-binding region spans 30–49 (QQAVAERLCLKVSTVRDIEE). The helical; Signal-anchor for type II membrane protein transmembrane segment at 112–132 (WLMSFTWLVLFVVVGLTGAWW) threads the bilayer. Residues 133–336 (WQNHKAQQEE…TLNAEPTPAQ (204 aa)) are Periplasmic-facing. The tract at residues 155 to 243 (NADKDSGQSV…PSALPTSQAG (89 aa)) is disordered. Residues 161–175 (GQSVPLDTGAVTSQD) show a composition bias toward polar residues. Composition is skewed to low complexity over residues 176–214 (TTPA…VVAP) and 221–243 (TAAT…SQAG).

This sequence belongs to the RodZ family.

The protein resides in the cell inner membrane. Functionally, cytoskeletal protein that is involved in cell-shape control through regulation of the length of the long axis. This chain is Cytoskeleton protein RodZ, found in Salmonella newport (strain SL254).